A 122-amino-acid polypeptide reads, in one-letter code: Large ribosomal subunit protein uL14 (122 aa).

This sequence belongs to the universal ribosomal protein uL14 family. In terms of assembly, part of the 50S ribosomal subunit. Forms a cluster with proteins L3 and L19. In the 70S ribosome, L14 and L19 interact and together make contacts with the 16S rRNA in bridges B5 and B8.

Its function is as follows. Binds to 23S rRNA. Forms part of two intersubunit bridges in the 70S ribosome. In Cereibacter sphaeroides (strain ATCC 17029 / ATH 2.4.9) (Rhodobacter sphaeroides), this protein is Large ribosomal subunit protein uL14.